Consider the following 403-residue polypeptide: Heptahelical transmembrane protein ADIPOR3 (403 aa).

Residues 1–73 lie on the Cytoplasmic side of the membrane; sequence MAAAAGEEVE…LSAFSIHNET (73 aa). Residues 74–94 traverse the membrane as a helical segment; it reads LNVWTHLIGFFIFLVLTIYTA. Residues 95-209 are Extracellular-facing; the sequence is TQVPNVVDLQ…QLIRPIPRWP (115 aa). The helical transmembrane segment at 210–230 threads the bilayer; that stretch reads FYAFLGGAMFCLLASSTCHLL. The Cytoplasmic portion of the chain corresponds to 231–246; it reads SCHSRRLAYIMLRLDY. The chain crosses the membrane as a helical span at residues 247 to 267; sequence AGIAALIATSFYPPVYYSFMC. At 268 to 274 the chain is on the extracellular side; the sequence is YPFFCNL. The helical transmembrane segment at 275–295 threads the bilayer; that stretch reads YLSCITILGVATIAFSLLPVF. Residues 296 to 306 are Cytoplasmic-facing; sequence QNPEFRTIRAC. A helical transmembrane segment spans residues 307 to 327; it reads LFFGMGASGVIPVIHKLILFW. Over 328–331 the chain is Extracellular; it reads HQPE. Residues 332–352 traverse the membrane as a helical segment; sequence ALHTTAYEVLMGLFYGIGALV. Over 353-374 the chain is Cytoplasmic; that stretch reads YATRVPERWMPGKFDIAGHSHQ. Residues 375–395 form a helical membrane-spanning segment; sequence LFHVLVVAGAYTHYHSGLVYL. Over 396–403 the chain is Extracellular; it reads KWRDVQGC.

The protein belongs to the ADIPOR family.

Its subcellular location is the membrane. In terms of biological role, may play a role in abiotic stress response. This Oryza sativa subsp. japonica (Rice) protein is Heptahelical transmembrane protein ADIPOR3 (ADIPOR3).